The sequence spans 307 residues: Oxygen-dependent coproporphyrinogen-III oxidase (307 aa).

Position 99 (Ser99) interacts with substrate. Residues His103 and His113 each contribute to the a divalent metal cation site. The active-site Proton donor is the His113. Residue 115–117 (NVR) coordinates substrate. Residues His152 and His182 each coordinate a divalent metal cation. The important for dimerization stretch occupies residues 247–282 (YVEFNLVFDRGTLFGLQSGGRTESILMSMPPVANWR). Position 265 to 267 (265 to 267 (GGR)) interacts with substrate.

It belongs to the aerobic coproporphyrinogen-III oxidase family. Homodimer. Requires a divalent metal cation as cofactor.

Its subcellular location is the cytoplasm. It carries out the reaction coproporphyrinogen III + O2 + 2 H(+) = protoporphyrinogen IX + 2 CO2 + 2 H2O. It functions in the pathway porphyrin-containing compound metabolism; protoporphyrin-IX biosynthesis; protoporphyrinogen-IX from coproporphyrinogen-III (O2 route): step 1/1. Involved in the heme biosynthesis. Catalyzes the aerobic oxidative decarboxylation of propionate groups of rings A and B of coproporphyrinogen-III to yield the vinyl groups in protoporphyrinogen-IX. The protein is Oxygen-dependent coproporphyrinogen-III oxidase of Burkholderia cenocepacia (strain ATCC BAA-245 / DSM 16553 / LMG 16656 / NCTC 13227 / J2315 / CF5610) (Burkholderia cepacia (strain J2315)).